The chain runs to 345 residues: Phosphate acyltransferase (345 aa).

This sequence belongs to the PlsX family. In terms of assembly, homodimer. Probably interacts with PlsY.

The protein localises to the cytoplasm. The enzyme catalyses a fatty acyl-[ACP] + phosphate = an acyl phosphate + holo-[ACP]. The protein operates within lipid metabolism; phospholipid metabolism. Functionally, catalyzes the reversible formation of acyl-phosphate (acyl-PO(4)) from acyl-[acyl-carrier-protein] (acyl-ACP). This enzyme utilizes acyl-ACP as fatty acyl donor, but not acyl-CoA. This chain is Phosphate acyltransferase, found in Nitratidesulfovibrio vulgaris (strain ATCC 29579 / DSM 644 / CCUG 34227 / NCIMB 8303 / VKM B-1760 / Hildenborough) (Desulfovibrio vulgaris).